The chain runs to 119 residues: uncharacterized protein (119 aa).

The chain crosses the membrane as a helical span at residues 74-91; sequence LSVHFLLNVISAILSMLI.

It is found in the membrane. This is an uncharacterized protein from Schizosaccharomyces pombe (strain 972 / ATCC 24843) (Fission yeast).